Consider the following 225-residue polypeptide: Endonuclease V (225 aa).

2 residues coordinate Mg(2+): Asp43 and Asp110.

The protein belongs to the endonuclease V family. Mg(2+) serves as cofactor.

The protein localises to the cytoplasm. The enzyme catalyses Endonucleolytic cleavage at apurinic or apyrimidinic sites to products with a 5'-phosphate.. Functionally, DNA repair enzyme involved in the repair of deaminated bases. Selectively cleaves double-stranded DNA at the second phosphodiester bond 3' to a deoxyinosine leaving behind the intact lesion on the nicked DNA. The chain is Endonuclease V from Thermotoga sp. (strain RQ2).